Consider the following 449-residue polypeptide: 3-phosphoshikimate 1-carboxyvinyltransferase (449 aa).

Residues lysine 28, serine 29, and arginine 33 each contribute to the 3-phosphoshikimate site. Residue lysine 28 coordinates phosphoenolpyruvate. Phosphoenolpyruvate contacts are provided by glycine 105 and arginine 133. The 3-phosphoshikimate site is built by serine 179, glutamine 181, aspartate 332, and lysine 359. Glutamine 181 is a binding site for phosphoenolpyruvate. Aspartate 332 (proton acceptor) is an active-site residue. Phosphoenolpyruvate contacts are provided by arginine 363 and arginine 406.

Belongs to the EPSP synthase family. As to quaternary structure, monomer.

Its subcellular location is the cytoplasm. It carries out the reaction 3-phosphoshikimate + phosphoenolpyruvate = 5-O-(1-carboxyvinyl)-3-phosphoshikimate + phosphate. It participates in metabolic intermediate biosynthesis; chorismate biosynthesis; chorismate from D-erythrose 4-phosphate and phosphoenolpyruvate: step 6/7. Functionally, catalyzes the transfer of the enolpyruvyl moiety of phosphoenolpyruvate (PEP) to the 5-hydroxyl of shikimate-3-phosphate (S3P) to produce enolpyruvyl shikimate-3-phosphate and inorganic phosphate. The polypeptide is 3-phosphoshikimate 1-carboxyvinyltransferase (Nitrobacter winogradskyi (strain ATCC 25391 / DSM 10237 / CIP 104748 / NCIMB 11846 / Nb-255)).